A 479-amino-acid polypeptide reads, in one-letter code: UDP-N-acetylmuramate--L-alanine ligase (479 aa).

128-134 is an ATP binding site; that stretch reads GAHGKTT.

The protein belongs to the MurCDEF family.

The protein resides in the cytoplasm. The catalysed reaction is UDP-N-acetyl-alpha-D-muramate + L-alanine + ATP = UDP-N-acetyl-alpha-D-muramoyl-L-alanine + ADP + phosphate + H(+). The protein operates within cell wall biogenesis; peptidoglycan biosynthesis. Functionally, cell wall formation. The chain is UDP-N-acetylmuramate--L-alanine ligase from Psychrobacter arcticus (strain DSM 17307 / VKM B-2377 / 273-4).